The sequence spans 492 residues: Glycerol kinase 1 (492 aa).

Thr10 is an ADP binding site. ATP-binding residues include Thr10 and Ser11. Thr10 is a binding site for sn-glycerol 3-phosphate. Position 14 (Lys14) interacts with ADP. Residues Arg80, Glu81, Tyr132, and Asp241 each coordinate sn-glycerol 3-phosphate. Residues Arg80, Glu81, Tyr132, and Asp241 each contribute to the glycerol site. Positions 263, 306, 407, and 411 each coordinate ADP. Residues Thr263, Gly306, and Gly407 each coordinate ATP.

The protein belongs to the FGGY kinase family.

The enzyme catalyses glycerol + ATP = sn-glycerol 3-phosphate + ADP + H(+). Its pathway is polyol metabolism; glycerol degradation via glycerol kinase pathway; sn-glycerol 3-phosphate from glycerol: step 1/1. With respect to regulation, inhibited by fructose 1,6-bisphosphate (FBP). Functionally, key enzyme in the regulation of glycerol uptake and metabolism. Catalyzes the phosphorylation of glycerol to yield sn-glycerol 3-phosphate. The sequence is that of Glycerol kinase 1 from Thermotoga maritima (strain ATCC 43589 / DSM 3109 / JCM 10099 / NBRC 100826 / MSB8).